The following is a 253-amino-acid chain: Uridylate kinase (253 aa).

9 to 12 (KLSG) serves as a coordination point for ATP. G51 serves as a coordination point for UMP. Residues G52 and R56 each contribute to the ATP site. Residues D72 and 133 to 140 (SGNPFFTT) contribute to the UMP site. ATP is bound by residues T160, Y166, and D169.

Belongs to the UMP kinase family. Homohexamer.

The protein localises to the cytoplasm. It catalyses the reaction UMP + ATP = UDP + ADP. Its pathway is pyrimidine metabolism; CTP biosynthesis via de novo pathway; UDP from UMP (UMPK route): step 1/1. With respect to regulation, inhibited by UTP. Its function is as follows. Catalyzes the reversible phosphorylation of UMP to UDP. This chain is Uridylate kinase, found in Synechococcus sp. (strain JA-2-3B'a(2-13)) (Cyanobacteria bacterium Yellowstone B-Prime).